We begin with the raw amino-acid sequence, 244 residues long: Tyrosine recombinase XerD-like (244 aa).

The Core-binding (CB) domain occupies 1–73 (MRDRISAFLE…ACNQFLYFLY (73 aa)). Positions 90–244 (AEKKTEKPEI…KTVLTLEKYR (155 aa)) constitute a Tyr recombinase domain. Catalysis depends on residues Lys150 and Arg211. Catalysis depends on Tyr243, which acts as the O-(3'-phospho-DNA)-tyrosine intermediate.

It belongs to the 'phage' integrase family. XerD-like subfamily.

The protein localises to the cytoplasm. In terms of biological role, putative tyrosine recombinase. Not involved in the cutting and rejoining of the recombining DNA molecules on dif(SL) site. The polypeptide is Tyrosine recombinase XerD-like (Streptococcus pneumoniae (strain CGSP14)).